Reading from the N-terminus, the 156-residue chain is 6,7-dimethyl-8-ribityllumazine synthase (156 aa).

5-amino-6-(D-ribitylamino)uracil is bound by residues W33, S64–E66, and V86–L88. E91 to T92 serves as a coordination point for (2S)-2-hydroxy-3-oxobutyl phosphate. H94 (proton donor) is an active-site residue. Residue I119 participates in 5-amino-6-(D-ribitylamino)uracil binding. (2S)-2-hydroxy-3-oxobutyl phosphate is bound at residue R133.

The protein belongs to the DMRL synthase family.

It catalyses the reaction (2S)-2-hydroxy-3-oxobutyl phosphate + 5-amino-6-(D-ribitylamino)uracil = 6,7-dimethyl-8-(1-D-ribityl)lumazine + phosphate + 2 H2O + H(+). It participates in cofactor biosynthesis; riboflavin biosynthesis; riboflavin from 2-hydroxy-3-oxobutyl phosphate and 5-amino-6-(D-ribitylamino)uracil: step 1/2. In terms of biological role, catalyzes the formation of 6,7-dimethyl-8-ribityllumazine by condensation of 5-amino-6-(D-ribitylamino)uracil with 3,4-dihydroxy-2-butanone 4-phosphate. This is the penultimate step in the biosynthesis of riboflavin. The polypeptide is 6,7-dimethyl-8-ribityllumazine synthase (Tropheryma whipplei (strain TW08/27) (Whipple's bacillus)).